The primary structure comprises 152 residues: MTEIYVDADACPVKDEAVKVAERHGLTVHIVSNSGMRPTGHPLVKQVVVPAGPDVADDWIAERAGPQDIVITGDIPLAARALEKGAAALGHDGRPFTQDSIGMALAMRDLMRELRETGQSKGGGPAFSKEDRSRFLRSLEDTVQAIRRRPPP.

The disordered stretch occupies residues 114–152; sequence LRETGQSKGGGPAFSKEDRSRFLRSLEDTVQAIRRRPPP. Residues 128-140 are compositionally biased toward basic and acidic residues; it reads SKEDRSRFLRSLE.

It belongs to the UPF0178 family.

The chain is UPF0178 protein Plav_1521 from Parvibaculum lavamentivorans (strain DS-1 / DSM 13023 / NCIMB 13966).